The primary structure comprises 309 residues: Olfactory receptor 5B21 (309 aa).

At 1 to 26 (MENSTEVTEFILLGLTDDPNLQIPLL) the chain is on the extracellular side. Asparagine 3 carries N-linked (GlcNAc...) asparagine glycosylation. A helical membrane pass occupies residues 27–47 (LAFLFIYLITLLGNGGMMVII). The Cytoplasmic portion of the chain corresponds to 48–55 (HSDSHLHT). The helical transmembrane segment at 56-76 (PMYFFLSNLSLVDLGYSSAVA) threads the bilayer. Residues 77–95 (PKTVAALRSGDKAISYDGC) are Extracellular-facing. A disulfide bond links cysteine 95 and cysteine 177. Residues 96 to 116 (AAQFFFFVGFATVECYLLASM) traverse the membrane as a helical segment. Residues 117–137 (AYDRHAAVCRPLHYTTTMTAG) are Cytoplasmic-facing. A helical membrane pass occupies residues 138 to 158 (VCALLATGSYVSGFLNASIHA). The Extracellular segment spans residues 159 to 199 (AGTFRLSFCGSNEINHFFCDIPPLLALSCSDTRISKLVVFV). The chain crosses the membrane as a helical span at residues 200-220 (AGFNVFFTLLVILISYFFICI). Residues 221 to 235 (TIQRMHSAEGQKKVF) lie on the Cytoplasmic side of the membrane. Residues 236–256 (STCASHLTALSIFYGTIIFMY) traverse the membrane as a helical segment. Over 257–270 (LQPNSSQSVDTDKI) the chain is Extracellular. An N-linked (GlcNAc...) asparagine glycan is attached at asparagine 260. Residues 271–291 (ASVFYTVVIPMLNPLIYSLRN) traverse the membrane as a helical segment. Residues 292-309 (KEVKSALWKILNKLYPQY) lie on the Cytoplasmic side of the membrane.

This sequence belongs to the G-protein coupled receptor 1 family.

The protein localises to the cell membrane. Its function is as follows. Odorant receptor. The chain is Olfactory receptor 5B21 from Homo sapiens (Human).